A 401-amino-acid polypeptide reads, in one-letter code: Dual-specificity RNA methyltransferase RlmN (401 aa).

The active-site Proton acceptor is E114. The region spanning 120-365 (DKGRGTLCVS…TMVRRTRGDD (246 aa)) is the Radical SAM core domain. C127 and C370 form a disulfide bridge. Positions 134, 138, and 141 each coordinate [4Fe-4S] cluster. S-adenosyl-L-methionine-binding positions include 187-188 (GE), S219, 241-243 (SLH), and N327. C370 acts as the S-methylcysteine intermediate in catalysis.

The protein belongs to the radical SAM superfamily. RlmN family. [4Fe-4S] cluster is required as a cofactor.

It is found in the cytoplasm. It carries out the reaction adenosine(2503) in 23S rRNA + 2 reduced [2Fe-2S]-[ferredoxin] + 2 S-adenosyl-L-methionine = 2-methyladenosine(2503) in 23S rRNA + 5'-deoxyadenosine + L-methionine + 2 oxidized [2Fe-2S]-[ferredoxin] + S-adenosyl-L-homocysteine. It catalyses the reaction adenosine(37) in tRNA + 2 reduced [2Fe-2S]-[ferredoxin] + 2 S-adenosyl-L-methionine = 2-methyladenosine(37) in tRNA + 5'-deoxyadenosine + L-methionine + 2 oxidized [2Fe-2S]-[ferredoxin] + S-adenosyl-L-homocysteine. Specifically methylates position 2 of adenine 2503 in 23S rRNA and position 2 of adenine 37 in tRNAs. m2A2503 modification seems to play a crucial role in the proofreading step occurring at the peptidyl transferase center and thus would serve to optimize ribosomal fidelity. The protein is Dual-specificity RNA methyltransferase RlmN of Xanthomonas campestris pv. campestris (strain 8004).